Here is a 241-residue protein sequence, read N- to C-terminus: MSDSKEVPSLPFLRHLLEELDSHEDSLLLFLCHDAAPGCTTVTQALCSLSQQRKLTLAALVEMLYVLQRMDLLKSRFGLSKEGAEQLLGTSFLTRYRKLMVCVGEELDSSELRALRLFACNLNPSLSTALSESSRFVELVLALENVGLVSPSSVSVLADMLRTLRRLDLCQQLVEYEQQEQARYRYCYAASPSLPVRTLRRGHGASEHEQLCMPVQESSDSPELLRTPVQESSSDSPEQTT.

DED domains lie at 8 to 78 and 95 to 175; these read PSLP…SRFG and RYRK…QLVE. The disordered stretch occupies residues 212 to 241; the sequence is CMPVQESSDSPELLRTPVQESSSDSPEQTT. Residues 229 to 241 show a composition bias toward polar residues; the sequence is VQESSSDSPEQTT.

In terms of assembly, associates with the death-inducing signaling complex (DISC) formed by TNFRSF6/FAS, FADD and CASP8. Interacts with FADD. Interacts with host TRAF2. Interacts with host NEMO/IKBKG (via N-terminus). Interacts with host SH3BP4; this interaction plays an important in the suppression of host autophagy.

The protein localises to the host cytoplasm. It is found in the host nucleus. Its function is as follows. Inhibits TNFRSF1A, TNFRSF6/FAS and TNFRSF12 induced apoptosis. Directs the degradation of host NFKBIB but not NFKBIA. Also suppresses host NF-kappa-B activation by interacting with and preventing ubiquitination of host NEMO/IKBKG, the NF-kappa-B essential modulator subunit of the IKK complex. Interferes with host CASP8/caspase-8 recruitment and activation at the death-inducing signaling complex (DISC). May lead to higher virus production and contribute to virus persistence and oncogenicity. Also participates in the inhibition of host autophagy by interacting with host SH3BP4. In Homo sapiens (Human), this protein is Viral CASP8 and FADD-like apoptosis regulator.